The following is a 245-amino-acid chain: MIKLVLIRHGQSLWNLENRFTGWTDVDLSENGLSEAREAGAILKKNGYTFDVAYTSVLKRAIRTLWIVLHEMDLTWVPIHKSWKLNERHYGALQGLNKDETAQKYGEEQVHIWRRSVDVRPPALTEDDPRYEATDPRYKTLKKGEFPLTECLEDTEKRVLAYWHSEIAPTLKSGNKVIISSHGNTIRSLVKYLDNLSSDGVVSLNIPTSIPLVYELDENLRPIRHYYLSMDGEVPEGEIPKHISF.

Residues 8-15 (RHGQSLWN), 21-22 (TG), Arg60, 87-90 (ERHY), Lys98, 114-115 (RR), and 183-184 (GN) contribute to the substrate site. The Tele-phosphohistidine intermediate role is filled by His9. Glu87 serves as the catalytic Proton donor/acceptor.

The protein belongs to the phosphoglycerate mutase family. BPG-dependent PGAM subfamily.

It carries out the reaction (2R)-2-phosphoglycerate = (2R)-3-phosphoglycerate. It participates in carbohydrate degradation; glycolysis; pyruvate from D-glyceraldehyde 3-phosphate: step 3/5. Catalyzes the interconversion of 2-phosphoglycerate and 3-phosphoglycerate. In Bacillus cereus (strain ATCC 14579 / DSM 31 / CCUG 7414 / JCM 2152 / NBRC 15305 / NCIMB 9373 / NCTC 2599 / NRRL B-3711), this protein is 2,3-bisphosphoglycerate-dependent phosphoglycerate mutase.